The primary structure comprises 83 residues: U25-theraphotoxin-Cg1a (83 aa).

An N-terminal signal peptide occupies residues 1 to 23 (MRFHTLLFLSFLLLVSCALICTA). A propeptide spanning residues 24–48 (QHPGLEKSGMFHENVGKGQHIEEKR) is cleaved from the precursor. 3 disulfide bridges follow: C50–C66, C57–C71, and C65–C81.

Belongs to the neurotoxin 07 (Beta/delta-agtx) family. 03 (aga-4) subfamily. JZTX sub-subfamily. In terms of tissue distribution, expressed by the venom gland.

Its subcellular location is the secreted. Its function is as follows. Inhibits TTX-sensitive sodium currents in rat dorsal root ganglion (DRG) neurons. The chain is U25-theraphotoxin-Cg1a from Chilobrachys guangxiensis (Chinese earth tiger tarantula).